A 115-amino-acid chain; its full sequence is uncharacterized protein (115 aa).

Transmembrane regions (helical) follow at residues 7–27, 40–60, and 72–92; these read TLIFFPLILQIVVTALLIWFD, YALTAFLLAAIPAFLTALLAA, and IVLVSSIISFVYCNMASYFYL.

The protein resides in the cell membrane. This is an uncharacterized protein from Haemophilus influenzae (strain ATCC 51907 / DSM 11121 / KW20 / Rd).